The chain runs to 687 residues: Glycine--tRNA ligase beta subunit (687 aa).

It belongs to the class-II aminoacyl-tRNA synthetase family. In terms of assembly, tetramer of two alpha and two beta subunits.

The protein resides in the cytoplasm. The catalysed reaction is tRNA(Gly) + glycine + ATP = glycyl-tRNA(Gly) + AMP + diphosphate. The chain is Glycine--tRNA ligase beta subunit from Neisseria gonorrhoeae (strain ATCC 700825 / FA 1090).